The chain runs to 255 residues: uncharacterized protein (255 aa).

Residues 3 to 58 (PVERRQIILEMVAEKGIVSIAELTDRMNVSHMTIRRDLQKLEQQGAVVLVSGGVQS) enclose the HTH deoR-type domain. Positions 20–39 (VSIAELTDRMNVSHMTIRRD) form a DNA-binding region, H-T-H motif.

This is an uncharacterized protein from Escherichia coli (strain K12).